Reading from the N-terminus, the 684-residue chain is UvrABC system protein C (684 aa).

The GIY-YIG domain maps to 16 to 95 (TDPGVYKFRD…IKRFDPRFNV (80 aa)). The region spanning 208-243 (APVRKRVTQRMEEAAENLEFELAARLRDDLGAIDKL) is the UVR domain. Over residues 332–352 (EAAEDAKLERRGVDQESHAEP) the composition is skewed to basic and acidic residues. The segment at 332–357 (EAAEDAKLERRGVDQESHAEPRQGNA) is disordered.

Belongs to the UvrC family. As to quaternary structure, interacts with UvrB in an incision complex.

It localises to the cytoplasm. Its function is as follows. The UvrABC repair system catalyzes the recognition and processing of DNA lesions. UvrC both incises the 5' and 3' sides of the lesion. The N-terminal half is responsible for the 3' incision and the C-terminal half is responsible for the 5' incision. The protein is UvrABC system protein C of Corynebacterium aurimucosum (strain ATCC 700975 / DSM 44827 / CIP 107346 / CN-1) (Corynebacterium nigricans).